Reading from the N-terminus, the 56-residue chain is Large ribosomal subunit protein bL33 (56 aa).

This sequence belongs to the bacterial ribosomal protein bL33 family.

This is Large ribosomal subunit protein bL33 from Haemophilus influenzae (strain 86-028NP).